We begin with the raw amino-acid sequence, 255 residues long: tRNA pseudouridine synthase A (255 aa).

Asp52 serves as the catalytic Nucleophile. Substrate is bound at residue Tyr111.

The protein belongs to the tRNA pseudouridine synthase TruA family. Homodimer.

The enzyme catalyses uridine(38/39/40) in tRNA = pseudouridine(38/39/40) in tRNA. Formation of pseudouridine at positions 38, 39 and 40 in the anticodon stem and loop of transfer RNAs. This chain is tRNA pseudouridine synthase A, found in Cereibacter sphaeroides (strain ATCC 17023 / DSM 158 / JCM 6121 / CCUG 31486 / LMG 2827 / NBRC 12203 / NCIMB 8253 / ATH 2.4.1.) (Rhodobacter sphaeroides).